The following is a 697-amino-acid chain: U-box domain-containing protein 18 (697 aa).

Residues 23–210 (SISIVTLLDS…INRILDHVGI (188 aa)) are U-box N-terminal domain (UND) required for EXO70B1 binding and crucial for the negative regulation of ABA-dependent stomatal movement. A U-box domain is found at 287 to 361 (LKVEDLLCPI…RKHCKTNGIV (75 aa)). 6 ARM repeats span residues 420 to 459 (SFNRSCLVKAGAVTPLLKLLSSVDIRIQENAMAGILNLSK), 461 to 500 (VTGKSKIAGEGLKILVEILNEGAKTETRLYSASALFYLSS), 502 to 544 (EDYS…GLLM), 546 to 587 (SDNH…KLAE), 589 to 631 (PDGT…NLCL), and 657 to 696 (NGEYGGSKKASALIRMIHEFQERKTGSVEPNLQRGRFVHA).

Interacts with EXO70B1 via its U-box N-terminal domain (UND).

Its subcellular location is the endomembrane system. It carries out the reaction S-ubiquitinyl-[E2 ubiquitin-conjugating enzyme]-L-cysteine + [acceptor protein]-L-lysine = [E2 ubiquitin-conjugating enzyme]-L-cysteine + N(6)-ubiquitinyl-[acceptor protein]-L-lysine.. Its pathway is protein modification; protein ubiquitination. Functions as an E3 ubiquitin ligase. Mediates EXO70B1 ubiquitination. Involved in the regulation of abscisic acid (ABA)-mediated stomatal movements. The protein is U-box domain-containing protein 18 of Arabidopsis thaliana (Mouse-ear cress).